The chain runs to 88 residues: Alpha-latrotoxin associated low molecular weight protein (88 aa).

The signal sequence occupies residues 1-18; sequence MSKLFFVAFLCLIISVFA.

The protein belongs to the arthropod CHH/MIH/GIH/VIH hormone family. In terms of tissue distribution, expressed by the venom gland.

The protein localises to the secreted. In terms of biological role, may increase the toxicity of alpha-latrotoxin and/or other venom components. Is non-toxic to mice and to the cockroach Periplaneta americana. In Latrodectus hesperus (Western black widow spider), this protein is Alpha-latrotoxin associated low molecular weight protein.